The primary structure comprises 341 residues: Cyclin-Y (341 aa).

Residue G2 is the site of N-myristoyl glycine attachment. Phosphoserine occurs at positions 21 and 25. A Phosphothreonine modification is found at T30. S33 is modified (phosphoserine). The residue at position 37 (T37) is a Phosphothreonine. A Phosphothreonine; by CDK14 modification is found at T67. Residues S71 and S73 each carry the phosphoserine; by CDK14 modification. Position 75 is a phosphothreonine (T75). S83 bears the Phosphoserine; by CDK14 mark. Residues S99, S100, and S102 each carry the phosphoserine modification. A Cyclin N-terminal domain is found at 143–265; sequence DIFDENLHPL…FLELLQFNIN (123 aa). At S280 the chain carries Phosphoserine. 2 positions are modified to phosphoserine; by CDK14: S288 and S295. 2 positions are modified to phosphoserine: S324 and S326. T331 is modified (phosphothreonine).

It belongs to the cyclin family. Cyclin Y subfamily. As to quaternary structure, found in a complex with CAPRIN2, LRP6 and CDK14 during G2/M stage; CAPRIN2 functions as a scaffold for the complex by binding to CCNY via its N terminus and to CDK14 via its C terminus. Interacts with CDK14. Interacts with CDK16. Interacts with LRP6. Ubiquitinated; leading to its degradation. In terms of processing, heavily phosphorylated. Phosphorylation at Ser-71 and Ser-73 by CDK14 is enhanced during the G2 and M cell cycle phases, and creates a phosphodegron triggering SCF-dependent ubiquitination. As to expression, widely expressed.

It is found in the cell membrane. The protein localises to the nucleus. Its function is as follows. Positive regulatory subunit of the cyclin-dependent kinases CDK14/PFTK1 and CDK16. Acts as a cell-cycle regulator of Wnt signaling pathway during G2/M phase by recruiting CDK14/PFTK1 to the plasma membrane and promoting phosphorylation of LRP6, leading to the activation of the Wnt signaling pathway. Recruits CDK16 to the plasma membrane. Isoform 3 might play a role in the activation of MYC-mediated transcription. This chain is Cyclin-Y (CCNY), found in Homo sapiens (Human).